The primary structure comprises 202 residues: uncharacterized protein (202 aa).

A disordered region spans residues 164-202; that stretch reads DTDSEQESDQESDQDSDQESEESDQESDQDSDQDSEGSE. A compositionally biased stretch (acidic residues) spans 165–202; sequence TDSEQESDQESDQDSDQESEESDQESDQDSDQDSEGSE.

This is an uncharacterized protein from Acanthamoeba polyphaga mimivirus (APMV).